The sequence spans 188 residues: MEDERSFSDICGGRLALQRRYYSPSCREFCLSCPRLSLRSLTAVTCTVWLAAYGLFTLCENSMILSAAIFITLLGLLGYLHFVKIDQETLLIIDSLGIQMTSSYASGKESTTFIEMGKVKDIVINEAIYMQKVIYYLCILLKDPVEPHGISQVVPVFQSAKPRLDCLIEVYRSCQEILAHQKATSTSP.

It belongs to the PIGH family. In terms of assembly, component of the glycosylphosphatidylinositol-N-acetylglucosaminyltransferase (GPI-GnT) complex composed at least by PIGA, PIGC, PIGH, PIGP, PIGQ, PIGY and DPM2. Interacts with PIGQ.

It localises to the cytoplasm. It participates in glycolipid biosynthesis; glycosylphosphatidylinositol-anchor biosynthesis. Its function is as follows. Part of the glycosylphosphatidylinositol-N-acetylglucosaminyltransferase (GPI-GnT) complex that catalyzes the transfer of N-acetylglucosamine from UDP-N-acetylglucosamine to phosphatidylinositol and participates in the first step of GPI biosynthesis. The protein is Phosphatidylinositol N-acetylglucosaminyltransferase subunit H of Homo sapiens (Human).